The following is a 235-amino-acid chain: Phosphatidylserine decarboxylase proenzyme (235 aa).

Ser204 acts as the Schiff-base intermediate with substrate; via pyruvic acid in catalysis. Ser204 bears the Pyruvic acid (Ser); by autocatalysis mark.

Belongs to the phosphatidylserine decarboxylase family. PSD-A subfamily. As to quaternary structure, heterodimer of a large membrane-associated beta subunit and a small pyruvoyl-containing alpha subunit. Pyruvate is required as a cofactor. Is synthesized initially as an inactive proenzyme. Formation of the active enzyme involves a self-maturation process in which the active site pyruvoyl group is generated from an internal serine residue via an autocatalytic post-translational modification. Two non-identical subunits are generated from the proenzyme in this reaction, and the pyruvate is formed at the N-terminus of the alpha chain, which is derived from the carboxyl end of the proenzyme. The post-translation cleavage follows an unusual pathway, termed non-hydrolytic serinolysis, in which the side chain hydroxyl group of the serine supplies its oxygen atom to form the C-terminus of the beta chain, while the remainder of the serine residue undergoes an oxidative deamination to produce ammonia and the pyruvoyl prosthetic group on the alpha chain.

It localises to the cell membrane. It catalyses the reaction a 1,2-diacyl-sn-glycero-3-phospho-L-serine + H(+) = a 1,2-diacyl-sn-glycero-3-phosphoethanolamine + CO2. It participates in phospholipid metabolism; phosphatidylethanolamine biosynthesis; phosphatidylethanolamine from CDP-diacylglycerol: step 2/2. Catalyzes the formation of phosphatidylethanolamine (PtdEtn) from phosphatidylserine (PtdSer). The protein is Phosphatidylserine decarboxylase proenzyme of Mycobacterium sp. (strain KMS).